A 105-amino-acid chain; its full sequence is Mitomycin resistance protein McrB (105 aa).

Involved in mitomycin resistance. May operate with McrA or may be a type of transcriptional activator protein. The protein is Mitomycin resistance protein McrB (mcrB) of Streptomyces lavendulae.